Reading from the N-terminus, the 666-residue chain is MRKINLLDLETTNKIAAGEVIERPFSVVKELVENSIDAGAKNITIEIEDGGQKLIKIIDDGEGIYPIDIKNAFLPHATSKINSIEDIYKISTMGFRGEALASISSVSKTKLKSRVDSYNFGKEIYIEGGKIEYLKDTGCNVGTTIEVSDLFYNVPARLKFLKSARSDSSSISDIVNRFILAHPDISFNLINKGKQSIKSYGTGNLKDSIRCVYNKTISENLINFESHKDIISVYGFIGKTEISRKSRTNQSIFVNKRYVKSKFITAAVENAFKSFLTVNSYPFFVIFIDIFPEYIDVNVHPTKSEVKFKDERAMFKTIFDAVHEAIKGELKESFTNFFNKEDINIYDSEKSITEPIKLEKEEVQIPIDLNSNNKIDIFGNNINKLPNNTELLKNIGVKAKNTLENNNDFYTSKQNEIYYANKNDECLNSCNKDNYSKIEKSLQKDNKNPDTLYLNEHNTNSSSINIKENKPNNFYVDMKIIGQFNNTYILIEKDKELYIIDQHAAHEKVLFEKFKSEIEKGYVISQILLSPVVIELSEDEFNIYEENKDIFKNSGFSVETFGEYTINIKEVPLILGKPNVENLFMDILYNLKNMKSKETSTIKYNAIATLACKSAVKANDNLKEEEIKKLIEDMLILNNPYTCPHGRPTMIKFTLKDLEKKFKRIQ.

Belongs to the DNA mismatch repair MutL/HexB family.

This protein is involved in the repair of mismatches in DNA. It is required for dam-dependent methyl-directed DNA mismatch repair. May act as a 'molecular matchmaker', a protein that promotes the formation of a stable complex between two or more DNA-binding proteins in an ATP-dependent manner without itself being part of a final effector complex. The sequence is that of DNA mismatch repair protein MutL from Clostridium botulinum (strain Okra / Type B1).